A 544-amino-acid chain; its full sequence is Elongator complex protein 3 (544 aa).

Residues 79 to 369 enclose the Radical SAM core domain; it reads RTASGIAVVA…YRIQRDIPMP (291 aa). 3 residues coordinate [4Fe-4S] cluster: C96, C106, and C109. Acetyl-CoA is bound by residues K161, 472 to 475, 495 to 497, and Y528; these read ELHV and FGT. The N-acetyltransferase domain occupies 393-544; it reads TKCRDIRARE…LDGPYMSKWL (152 aa).

This sequence belongs to the ELP3 family. Component of the elongator complex. [4Fe-4S] cluster is required as a cofactor.

It localises to the cytoplasm. The catalysed reaction is uridine(34) in tRNA + acetyl-CoA + S-adenosyl-L-methionine + H2O = 5-(carboxymethyl)uridine(34) in tRNA + 5'-deoxyadenosine + L-methionine + CoA + 2 H(+). It functions in the pathway tRNA modification; 5-methoxycarbonylmethyl-2-thiouridine-tRNA biosynthesis. Its function is as follows. Catalytic tRNA acetyltransferase subunit of the elongator complex which is required for multiple tRNA modifications, including mcm5U (5-methoxycarbonylmethyl uridine), mcm5s2U (5-methoxycarbonylmethyl-2-thiouridine), and ncm5U (5-carbamoylmethyl uridine). In the elongator complex, acts as a tRNA uridine(34) acetyltransferase, which mediates formation of carboxymethyluridine in the wobble base at position 34 in tRNAs. This chain is Elongator complex protein 3, found in Schizosaccharomyces pombe (strain 972 / ATCC 24843) (Fission yeast).